The chain runs to 728 residues: Protein Hook homolog 1 (728 aa).

Position 1 is an N-acetylmethionine (Met1). The interval Met1–Glu555 is sufficient for interaction with microtubules. A Calponin-homology (CH) domain is found at Leu12–Ala128. Coiled coils occupy residues Pro168–Ala443 and Leu477–Arg658. Ser235 carries the post-translational modification Phosphoserine. Positions Gln481–Gln510 are disordered. Residues Leu657–Asp728 form a sufficient for interaction with AKTIP and VPS18 region. Phosphoserine is present on residues Ser719 and Ser727.

This sequence belongs to the hook family. Self-associates. Component of the FTS/Hook/FHIP complex (FHF complex), composed of AKTIP/FTS, FHIP1B, and one or more members of the Hook family of proteins HOOK1, HOOK2, and HOOK3. Interacts directly with AKTIP/FTS, HOOK2 and HOOK3. Associates with several subunits of the homotypic vesicular sorting complex (the HOPS complex) including VPS16, VPS18, VPS39 and VPS41; these interactions may be indirect. Interacts with CCDC181. Interacts (via coiled-coil region) with RIMBP3 (via C-terminus). Interacts with LRGUK (via guanylate kinase-like domain). Interacts with microtubules. May interacts with CLN3. Interacts with AP4M1; the interaction is direct, mediates the interaction between FTS-Hook-FHIP (FHF) complex and AP-4 and the perinuclear distribution of AP-4. As to expression, mainly expressed in testis.

It localises to the cytoplasm. The protein resides in the cytoskeleton. Functionally, component of the FTS/Hook/FHIP complex (FHF complex). The FHF complex may function to promote vesicle trafficking and/or fusion via the homotypic vesicular protein sorting complex (the HOPS complex). FHF complex promotes the distribution of AP-4 complex to the perinuclear area of the cell. Required for spermatid differentiation. Probably involved in the positioning of the microtubules of the manchette and the flagellum in relation to the membrane skeleton. The sequence is that of Protein Hook homolog 1 (Hook1) from Mus musculus (Mouse).